The primary structure comprises 318 residues: NADH-ubiquinone oxidoreductase chain 1 (318 aa).

8 helical membrane passes run 2 to 22, 69 to 89, 100 to 120, 146 to 166, 171 to 191, 231 to 251, 253 to 273, and 285 to 305; these read FMIN…FLTL, LLFT…WLPL, LGVL…LWSG, LAII…TNLI, HMWL…STLA, IMMM…TPLV, GIYT…FLWI, and LMHL…MWHV.

Belongs to the complex I subunit 1 family. Core subunit of respiratory chain NADH dehydrogenase (Complex I) which is composed of 45 different subunits.

It localises to the mitochondrion inner membrane. It catalyses the reaction a ubiquinone + NADH + 5 H(+)(in) = a ubiquinol + NAD(+) + 4 H(+)(out). Core subunit of the mitochondrial membrane respiratory chain NADH dehydrogenase (Complex I) which catalyzes electron transfer from NADH through the respiratory chain, using ubiquinone as an electron acceptor. Essential for the catalytic activity and assembly of complex I. The polypeptide is NADH-ubiquinone oxidoreductase chain 1 (MT-ND1) (Myrmecophaga tridactyla (Giant anteater)).